The chain runs to 497 residues: Alkane hydroxylase MAH1 (497 aa).

The helical transmembrane segment at methionine 3–leucine 23 threads the bilayer. Cysteine 444 lines the heme pocket.

It belongs to the cytochrome P450 family. The cofactor is heme. As to expression, expressed in the expanding regions of the inflorescence stems, specifically to the epidermal pavement cells, petioles and siliques.

The protein resides in the endoplasmic reticulum membrane. In terms of biological role, involved in the formation of secondary alcohols and ketones in stem cuticular wax. Catalyzes the hydroxylation of a methylene unit in the middle of alkane molecules to form secondary alcohols and possibly also a second hydroxylation leading to the corresponding ketones. In Arabidopsis thaliana (Mouse-ear cress), this protein is Alkane hydroxylase MAH1.